The sequence spans 194 residues: Metalloproteinase inhibitor 2 (194 aa).

Cys1 is a Zn(2+) binding site. 2 involved in metalloproteinase-binding regions span residues 1–4 and 69–70; these read CSCS and SA. 6 cysteine pairs are disulfide-bonded: Cys1–Cys72, Cys3–Cys101, Cys13–Cys126, Cys128–Cys175, Cys133–Cys138, and Cys146–Cys167. The region spanning 1–126 is the NTR domain; the sequence is CSCSPVHPQQ…SLNHRYQMGC (126 aa).

It belongs to the protease inhibitor I35 (TIMP) family. Interacts (via the C-terminal) with MMP2 (via the C-terminal PEX domain); the interaction inhibits the MMP2 activity. The activity of TIMP2 is dependent on the presence of disulfide bonds.

The protein localises to the secreted. In terms of biological role, complexes with metalloproteinases (such as collagenases) and irreversibly inactivates them by binding to their catalytic zinc cofactor. The chain is Metalloproteinase inhibitor 2 (TIMP2) from Oryctolagus cuniculus (Rabbit).